Here is a 546-residue protein sequence, read N- to C-terminus: Phosphoglucomutase (546 aa).

The active-site Phosphoserine intermediate is the Ser-135. Residues Ser-135, Asp-288, Asp-290, and Asp-292 each contribute to the Mg(2+) site.

Belongs to the phosphohexose mutase family. The cofactor is Mg(2+).

It carries out the reaction alpha-D-glucose 1-phosphate = alpha-D-glucose 6-phosphate. It participates in glycolipid metabolism; diglucosyl-diacylglycerol biosynthesis. Its function is as follows. Catalyzes the interconversion between glucose-6-phosphate and alpha-glucose-1-phosphate. This is the first step in the biosynthesis of diglucosyl-diacylglycerol (Glc2-DAG), i.e. a glycolipid found in the membrane, which is also used as a membrane anchor for lipoteichoic acid (LTA). The sequence is that of Phosphoglucomutase (pgcA) from Staphylococcus epidermidis (strain ATCC 35984 / DSM 28319 / BCRC 17069 / CCUG 31568 / BM 3577 / RP62A).